Consider the following 277-residue polypeptide: Shikimate dehydrogenase (NADP(+)) (277 aa).

Shikimate-binding positions include 15-17 and Thr62; that span reads SLS. Lys66 (proton acceptor) is an active-site residue. The shikimate site is built by Asn87 and Asp102. NADP(+) contacts are provided by residues 127–131, 151–156, and Ile219; these read GAGGA and NRTRDK. Tyr221 contributes to the shikimate binding site. Position 242 (Gly242) interacts with NADP(+).

This sequence belongs to the shikimate dehydrogenase family. Homodimer.

The catalysed reaction is shikimate + NADP(+) = 3-dehydroshikimate + NADPH + H(+). It functions in the pathway metabolic intermediate biosynthesis; chorismate biosynthesis; chorismate from D-erythrose 4-phosphate and phosphoenolpyruvate: step 4/7. Its function is as follows. Involved in the biosynthesis of the chorismate, which leads to the biosynthesis of aromatic amino acids. Catalyzes the reversible NADPH linked reduction of 3-dehydroshikimate (DHSA) to yield shikimate (SA). The polypeptide is Shikimate dehydrogenase (NADP(+)) (Bacillus mycoides (strain KBAB4) (Bacillus weihenstephanensis)).